The sequence spans 187 residues: Frataxin, mitochondrial (187 aa).

This sequence belongs to the frataxin family. In terms of assembly, monomer. Oligomer. Interacts with NIFS1.

It localises to the mitochondrion. It carries out the reaction 4 Fe(2+) + O2 + 4 H(+) = 4 Fe(3+) + 2 H2O. Its function is as follows. Promotes the biosynthesis of heme as well as the assembly and repair of iron-sulfur clusters by delivering Fe(2+) to proteins involved in these pathways. May play a role in the protection against iron-catalyzed oxidative stress through its ability to catalyze the oxidation of Fe(2+) to Fe(3+). May be able to store large amounts of the metal in the form of a ferrihydrite mineral by oligomerization. Binds to the mitochondrial cysteine desulfurase NIFS1 and increases its activity. The chain is Frataxin, mitochondrial (FH) from Arabidopsis thaliana (Mouse-ear cress).